The sequence spans 398 residues: ATP-dependent (S)-NAD(P)H-hydrate dehydratase 1 (398 aa).

Residues 80-391 form the YjeF C-terminal domain; sequence LLRKAFQMIP…GYIGEAFELV (312 aa). Residues Gly-187 and 240–246 contribute to the (6S)-NADPHX site; that span reads NHVEFQR. ATP contacts are provided by residues 280-284 and 300-309; these read KGSID and GSPKRCGGQG. Asp-310 provides a ligand contact to (6S)-NADPHX.

The protein belongs to the NnrD/CARKD family. The cofactor is Mg(2+).

It localises to the cytoplasm. It carries out the reaction (6S)-NADHX + ATP = ADP + phosphate + NADH + H(+). The enzyme catalyses (6S)-NADPHX + ATP = ADP + phosphate + NADPH + H(+). Catalyzes the dehydration of the S-form of NAD(P)HX at the expense of ATP, which is converted to ADP. Together with NAD(P)HX epimerase, which catalyzes the epimerization of the S- and R-forms, the enzyme allows the repair of both epimers of NAD(P)HX, a damaged form of NAD(P)H that is a result of enzymatic or heat-dependent hydration. This chain is ATP-dependent (S)-NAD(P)H-hydrate dehydratase 1, found in Puccinia graminis f. sp. tritici (strain CRL 75-36-700-3 / race SCCL) (Black stem rust fungus).